The sequence spans 237 residues: Lipoprotein-releasing system ATP-binding protein LolD (237 aa).

Residues 8 to 236 form the ABC transporter domain; sequence ISVTDLRKTF…EAIKKSVKTA (229 aa). 40 to 47 serves as a coordination point for ATP; that stretch reads GKSGSGKS.

Belongs to the ABC transporter superfamily. Lipoprotein translocase (TC 3.A.1.125) family. The complex is composed of two ATP-binding proteins (LolD) and two transmembrane proteins (LolC and LolE).

It localises to the cell inner membrane. Part of the ABC transporter complex LolCDE involved in the translocation of mature outer membrane-directed lipoproteins, from the inner membrane to the periplasmic chaperone, LolA. Responsible for the formation of the LolA-lipoprotein complex in an ATP-dependent manner. The chain is Lipoprotein-releasing system ATP-binding protein LolD from Leptospira interrogans serogroup Icterohaemorrhagiae serovar Lai (strain 56601).